Consider the following 581-residue polypeptide: Pre-mRNA 3'-end-processing factor FIP1 (581 aa).

Composition is skewed to basic and acidic residues over residues Met1 to Val10 and Val32 to Leu42. Disordered stretches follow at residues Met1 to Val95, Thr211 to Asp282, and Arg320 to Glu581. Residues Met1–Gly110 are sufficient for interaction with PAPOLA. The segment at Met1–Pro332 is necessary for stimulating PAPOLA activity. Acidic residues-rich tracts occupy residues Asp43–Asn54 and Thr80–Asp94. Phosphoserine occurs at positions 84, 86, and 88. Residues Lys136–Asn219 are sufficient for interaction with CPSF4. Positions Ser247–Ser267 are enriched in low complexity. Positions Trp271–Asp282 are enriched in basic and acidic residues. Ser280 carries the phosphoserine modification. A compositionally biased stretch (polar residues) spans Arg320–Ser330. Positions Lys331–Leu389 are enriched in pro residues. Residue Tyr411 is modified to Phosphotyrosine. Residues Leu419–Gln435 are compositionally biased toward polar residues. A sufficient for interaction with CPSF1 and CSTF3 region spans residues Ser428 to Glu581. The span at Tyr439 to Ser479 shows a compositional bias: basic and acidic residues. The arg/Asp/Glu-rich domain stretch occupies residues Arg442–Asp477. The tract at residues His478–Ser535 is sufficient for interaction with AHCYL1. Position 479 is a phosphoserine (Ser479). Phosphothreonine is present on Thr481. Phosphoserine occurs at positions 483 and 487. The segment covering Asp488–His515 has biased composition (basic and acidic residues). Positions Lys529 to Arg538 are enriched in basic residues. The residue at position 541 (Ser541) is a Phosphoserine. A compositionally biased stretch (basic residues) spans His547–Arg557.

The protein belongs to the FIP1 family. Component of the cleavage and polyadenylation specificity factor (CPSF) complex, composed of CPSF1, CPSF2, CPSF3, CPSF4 and FIP1L1. Found in a complex with CPSF1, FIP1L1 and PAPOLA. Interacts with CPSF1, CPSF4, CSTF2 and CSTF3. Interacts with AHCYL1 (when phosphorylated); the interaction is direct and associates AHCYL1 with the CPSF complex and RNA. Interacts with PAPOLA; the interaction seems to be increased by the interaction with AHCYL1. Interacts with NUDT21/CPSF5; this interaction occurs in a RNA sequence-specific manner. Interacts (preferentially via unphosphorylated form and Arg/Glu/Asp-rich domain) with CPSF6 (via Arg/Ser-rich domain); this interaction mediates, at least in part, the interaction between the CFIm and CPSF complexes and may be inhibited by CPSF6 hyper-phosphorylation. Interacts (preferentially via unphosphorylated form and Arg/Asp/Glu-rich domain) with CPSF7 (via Arg/Ser-rich domain); this interaction mediates, at least in part, the interaction between the CFIm and CPSF complexes and may be inhibited by CPSF7 hyper-phosphorylation.

It is found in the nucleus. In terms of biological role, component of the cleavage and polyadenylation specificity factor (CPSF) complex that plays a key role in pre-mRNA 3'-end formation, recognizing the AAUAAA signal sequence and interacting with poly(A) polymerase and other factors to bring about cleavage and poly(A) addition. FIP1L1 contributes to poly(A) site recognition and stimulates poly(A) addition. Binds to U-rich RNA sequence elements surrounding the poly(A) site. May act to tether poly(A) polymerase to the CPSF complex. In Mus musculus (Mouse), this protein is Pre-mRNA 3'-end-processing factor FIP1 (Fip1l1).